The chain runs to 53 residues: Bowman-Birk type proteinase inhibitor 1 (53 aa).

5 cysteine pairs are disulfide-bonded: Cys-9/Cys-24, Cys-12/Cys-51, Cys-14/Cys-22, Cys-31/Cys-38, and Cys-40/Cys-48.

As to quaternary structure, dimer.

Functionally, inhibits trypsin (IC(50)=6.20 nM), neutrophil elastase (ELANE) and, to a lesser extent, alpha-chymotrypsin (IC(50)=3.44 uM). The protein is Bowman-Birk type proteinase inhibitor 1 of Lathyrus sativus (White vetchling).